We begin with the raw amino-acid sequence, 600 residues long: Dihydroxy-acid dehydratase (600 aa).

Asp-82 is a Mg(2+) binding site. Cys-123 is a [2Fe-2S] cluster binding site. Mg(2+) is bound by residues Asp-124 and Lys-125. Lys-125 carries the post-translational modification N6-carboxylysine. A [2Fe-2S] cluster-binding site is contributed by Cys-192. Glu-489 is a binding site for Mg(2+). Ser-515 (proton acceptor) is an active-site residue.

This sequence belongs to the IlvD/Edd family. Homodimer. [2Fe-2S] cluster serves as cofactor. It depends on Mg(2+) as a cofactor.

It catalyses the reaction (2R)-2,3-dihydroxy-3-methylbutanoate = 3-methyl-2-oxobutanoate + H2O. The enzyme catalyses (2R,3R)-2,3-dihydroxy-3-methylpentanoate = (S)-3-methyl-2-oxopentanoate + H2O. It functions in the pathway amino-acid biosynthesis; L-isoleucine biosynthesis; L-isoleucine from 2-oxobutanoate: step 3/4. The protein operates within amino-acid biosynthesis; L-valine biosynthesis; L-valine from pyruvate: step 3/4. Functionally, functions in the biosynthesis of branched-chain amino acids. Catalyzes the dehydration of (2R,3R)-2,3-dihydroxy-3-methylpentanoate (2,3-dihydroxy-3-methylvalerate) into 2-oxo-3-methylpentanoate (2-oxo-3-methylvalerate) and of (2R)-2,3-dihydroxy-3-methylbutanoate (2,3-dihydroxyisovalerate) into 2-oxo-3-methylbutanoate (2-oxoisovalerate), the penultimate precursor to L-isoleucine and L-valine, respectively. In Bacteroides thetaiotaomicron (strain ATCC 29148 / DSM 2079 / JCM 5827 / CCUG 10774 / NCTC 10582 / VPI-5482 / E50), this protein is Dihydroxy-acid dehydratase.